We begin with the raw amino-acid sequence, 257 residues long: Glutamate racemase (257 aa).

Residues 12–13 (DS) and 44–45 (YG) contribute to the substrate site. Cys75 functions as the Proton donor/acceptor in the catalytic mechanism. 76–77 (NT) contacts substrate. Residue Cys185 is the Proton donor/acceptor of the active site. 186 to 187 (TH) lines the substrate pocket.

This sequence belongs to the aspartate/glutamate racemases family.

The enzyme catalyses L-glutamate = D-glutamate. The protein operates within cell wall biogenesis; peptidoglycan biosynthesis. Provides the (R)-glutamate required for cell wall biosynthesis. The protein is Glutamate racemase of Clostridium botulinum (strain 657 / Type Ba4).